The sequence spans 550 residues: Major fimbrium tip subunit FimE (550 aa).

An N-terminal signal peptide occupies residues 1 to 21; the sequence is MKSKSIIAQLLYVLIAFMAVS. Cys22 is lipidated: N-palmitoyl cysteine. The S-diacylglycerol cysteine moiety is linked to residue Cys22. Residues 22 to 51 constitute a propeptide that is removed on maturation; it reads CVADKSEPCPSGEPTRVSGSIVSLEHHGLR.

The protein belongs to the FimE family. As to quaternary structure, fimbriae are composed of a major, structural subunit and the minor components FimC, FimD and FimE. Identified in a complex composed of FimC, FimD and FimE (in vitro). Does not directly interact with host proteins, but only as a complex with FimC and FimD.

It is found in the fimbrium. Its subcellular location is the cell outer membrane. Functionally, probably a component of the fimbrium tip; required for incorporation of FimC and FimD into fimbriae. These long, filamentous pili are attached to the cell surface; they mediate biofilm formation, adhesion onto host cells and onto other bacteria that are part of the oral microbiome. They play an important role in invasion of periodontal tissues and are major virulence factors. FimC, FimD and FimE contribute to interaction with host CXCR4 and thereby down-regulate the TLR2-mediated host immune response. The polypeptide is Major fimbrium tip subunit FimE (Porphyromonas gingivalis (strain ATCC 33277 / DSM 20709 / CIP 103683 / JCM 12257 / NCTC 11834 / 2561)).